The following is a 239-amino-acid chain: Orotidine 5'-phosphate decarboxylase (239 aa).

Residues Asp-11, Lys-33, 60–69, Thr-123, Arg-185, Gln-194, Gly-214, and Arg-215 contribute to the substrate site; that span reads DLKLHDIPTT. Lys-62 serves as the catalytic Proton donor.

It belongs to the OMP decarboxylase family. Type 1 subfamily. Homodimer.

It carries out the reaction orotidine 5'-phosphate + H(+) = UMP + CO2. It participates in pyrimidine metabolism; UMP biosynthesis via de novo pathway; UMP from orotate: step 2/2. Functionally, catalyzes the decarboxylation of orotidine 5'-monophosphate (OMP) to uridine 5'-monophosphate (UMP). The sequence is that of Orotidine 5'-phosphate decarboxylase (pyrF) from Bacillus subtilis (strain 168).